The primary structure comprises 946 residues: Bifunctional glutamine synthetase adenylyltransferase/adenylyl-removing enzyme (946 aa).

Residues 1–440 (MKPLSSPLQQ…VFNELIGDDE (440 aa)) form an adenylyl removase region. An adenylyl transferase region spans residues 449 to 946 (SEQWRELWQD…ASWQKWLVEE (498 aa)).

This sequence belongs to the GlnE family. Mg(2+) is required as a cofactor.

The catalysed reaction is [glutamine synthetase]-O(4)-(5'-adenylyl)-L-tyrosine + phosphate = [glutamine synthetase]-L-tyrosine + ADP. It catalyses the reaction [glutamine synthetase]-L-tyrosine + ATP = [glutamine synthetase]-O(4)-(5'-adenylyl)-L-tyrosine + diphosphate. Functionally, involved in the regulation of glutamine synthetase GlnA, a key enzyme in the process to assimilate ammonia. When cellular nitrogen levels are high, the C-terminal adenylyl transferase (AT) inactivates GlnA by covalent transfer of an adenylyl group from ATP to specific tyrosine residue of GlnA, thus reducing its activity. Conversely, when nitrogen levels are low, the N-terminal adenylyl removase (AR) activates GlnA by removing the adenylyl group by phosphorolysis, increasing its activity. The regulatory region of GlnE binds the signal transduction protein PII (GlnB) which indicates the nitrogen status of the cell. This Escherichia coli (strain K12 / MC4100 / BW2952) protein is Bifunctional glutamine synthetase adenylyltransferase/adenylyl-removing enzyme.